A 685-amino-acid chain; its full sequence is Bifunctional lycopene cyclase/phytoene synthase (685 aa).

The tract at residues 15 to 255 (TLSYRHFHLL…LVSACFTFDR (241 aa)) is lycopene beta-cyclase. Transmembrane regions (helical) follow at residues 21-41 (FHLLWTLPLCAVLFLVARPFL), 48-68 (KLILLPIIAFVWTTPWDNLIV), 92-114 (YFFFVIQSLISTLWCTLLTRWAL), 129-149 (LATPAVVVCMLCFVLGLKAAV), 156-176 (YFGMITWWSSLPLALLLWGSV), 187-207 (GLAPFALSVLAPTFYLWASDV), and 231-251 (LPIEEMLFFLVTNLILVSACF). The segment at 262–685 (QSVAENAPPL…RAVSAVYFGV (424 aa)) is phytoene synthase.

In the N-terminal section; belongs to the lycopene beta-cyclase family. This sequence in the C-terminal section; belongs to the phytoene/squalene synthase family.

The protein resides in the membrane. It catalyses the reaction all-trans-lycopene = gamma-carotene. The enzyme catalyses gamma-carotene = all-trans-beta-carotene. The catalysed reaction is 2 (2E,6E,10E)-geranylgeranyl diphosphate = 15-cis-phytoene + 2 diphosphate. Its pathway is carotenoid biosynthesis; beta-carotene biosynthesis. It participates in carotenoid biosynthesis; phytoene biosynthesis; all-trans-phytoene from geranylgeranyl diphosphate: step 1/1. Bifunctional enzyme that catalyzes the reactions from geranylgeranyl diphosphate to phytoene (phytoene synthase) and lycopene to beta-carotene via the intermediate gamma-carotene (lycopene cyclase). This chain is Bifunctional lycopene cyclase/phytoene synthase, found in Sporisorium reilianum (strain SRZ2) (Maize head smut fungus).